The sequence spans 144 residues: Protection of telomeres protein 1c (144 aa).

Belongs to the telombin family. In terms of tissue distribution, expressed at extremely low levels at the limit of detection.

The protein resides in the nucleus. It localises to the chromosome. The protein localises to the telomere. In terms of biological role, binds specifically single-stranded telomeric DNA with weak affinity. Has probably no function in the regulation of telomere length. The chain is Protection of telomeres protein 1c from Arabidopsis thaliana (Mouse-ear cress).